Here is a 238-residue protein sequence, read N- to C-terminus: Leucine-rich repeat-containing protein 57 (238 aa).

LRR repeat units lie at residues 10–36, 37–62, 64–82, 83–106, 108–128, 129–152, 154–173, and 174–199; these read LETS…LQKL, TANL…SFQH, KSFT…DIGK, LKKL…IGQL, SLRT…GLGT, LRQL…VAEL, AIEI…EVSR, and TPRL…ILTD.

In Danio rerio (Zebrafish), this protein is Leucine-rich repeat-containing protein 57 (lrrc57).